A 196-amino-acid chain; its full sequence is Probable malonic semialdehyde reductase RutE (196 aa).

Belongs to the nitroreductase family. HadB/RutE subfamily. It depends on FMN as a cofactor.

It catalyses the reaction 3-hydroxypropanoate + NADP(+) = 3-oxopropanoate + NADPH + H(+). Its function is as follows. May reduce toxic product malonic semialdehyde to 3-hydroxypropionic acid, which is excreted. The chain is Probable malonic semialdehyde reductase RutE from Shigella dysenteriae serotype 1 (strain Sd197).